The chain runs to 294 residues: uncharacterized protein (294 aa).

3 consecutive transmembrane segments (helical) span residues 21–41 (AIVA…TFTF), 51–71 (PIIW…LWAA), and 77–97 (ILFS…VFLF). A disordered region spans residues 156–176 (HPVPFPAEPGSPDPVSPPPPI). A coiled-coil region spans residues 184-215 (ERAESLHAGNIELAEDLQRIQEMERNLENERS). A compositionally biased stretch (basic and acidic residues) spans 265-277 (QQENESRLEERRF). The segment at 265 to 294 (QQENESRLEERRFQSHSTNSLFEADSSRDN) is disordered.

Its subcellular location is the mitochondrion membrane. This is an uncharacterized protein from Arabidopsis thaliana (Mouse-ear cress).